The sequence spans 314 residues: ATP synthase gamma chain (314 aa).

This sequence belongs to the ATPase gamma chain family. As to quaternary structure, F-type ATPases have 2 components, CF(1) - the catalytic core - and CF(0) - the membrane proton channel. CF(1) has five subunits: alpha(3), beta(3), gamma(1), delta(1), epsilon(1). CF(0) has three main subunits: a, b and c.

Its subcellular location is the cell membrane. In terms of biological role, produces ATP from ADP in the presence of a proton gradient across the membrane. The gamma chain is believed to be important in regulating ATPase activity and the flow of protons through the CF(0) complex. This chain is ATP synthase gamma chain, found in Limosilactobacillus reuteri (strain DSM 20016) (Lactobacillus reuteri).